We begin with the raw amino-acid sequence, 715 residues long: MHEQRAKPSAFQLTIRPDNIGVITIDVPGEKVNTLKAEFVEQVNDVLIRAQQHPALEGLVIVSGKPDSFIAGADITMIAACTTAKEAETLAKKGQSTLAQIAAFQVPVVAAIHGACLGGGLELALACHGRVCSLDDKTALGLPEVQLGLLPGSGGTQRLPRLIGASKALDMILTGKHIRARQALRLGLVDDAVPQSILLQTAIERVKQGWQSRRELPWQERLLNGPLGKSLLFSIVRKKTLAKTHGNYPAAERIIQVVRTGLDSGIASGYEAEARAFGELAMTPQSAALRSLFFASTALKKERGGNAQPHALHRIGILGGGLMGGGIACVTATRGGLPVRIKDVNETGINHALKYSWDVLSKRVRSKRMRPAERQKQMMLISGSTDYSGFDQVDVVIEAVFEDLSLKQQMVAEIEQHAAPHTIFASNTSSLPIGQIAAKAQRPEQVIGLHYFSPVDKMPLVEVIPHATTSEETIATTVALAHKQGKTAIVVADRAGFYVNRILAPYINEAARCLLEGEPIESLDKALVDFGFPVGPITLLDEVGIDVGTKISPVLVEQLGPRFAAPAAFDAVLKDGRKGRKNGRGFYLYPSEGQQRQRHKRADTSVYILLGITPKSHLQQAVIAQRCVMMMLNEAARCLDEGVIRSARDGDIGAVFGIGFPPFLGGPFRYMDQLGVEKVVKTLEYLQRQHGEYFAPCERLQRMAQQGERFYPQGS.

Residues 1–194 are enoyl-CoA hydratase; the sequence is MHEQRAKPSA…RLGLVDDAVP (194 aa). Residues 310 to 715 are 3-hydroxyacyl-CoA dehydrogenase; that stretch reads HALHRIGILG…QGERFYPQGS (406 aa).

The protein in the N-terminal section; belongs to the enoyl-CoA hydratase/isomerase family. It in the central section; belongs to the 3-hydroxyacyl-CoA dehydrogenase family. Heterotetramer of two alpha chains (FadJ) and two beta chains (FadI).

It is found in the cytoplasm. The catalysed reaction is a (3S)-3-hydroxyacyl-CoA = a (2E)-enoyl-CoA + H2O. The enzyme catalyses a 4-saturated-(3S)-3-hydroxyacyl-CoA = a (3E)-enoyl-CoA + H2O. It carries out the reaction a (3S)-3-hydroxyacyl-CoA + NAD(+) = a 3-oxoacyl-CoA + NADH + H(+). It catalyses the reaction (3S)-3-hydroxybutanoyl-CoA = (3R)-3-hydroxybutanoyl-CoA. It participates in lipid metabolism; fatty acid beta-oxidation. Functionally, catalyzes the formation of a hydroxyacyl-CoA by addition of water on enoyl-CoA. Also exhibits 3-hydroxyacyl-CoA epimerase and 3-hydroxyacyl-CoA dehydrogenase activities. The polypeptide is Fatty acid oxidation complex subunit alpha (Serratia proteamaculans (strain 568)).